The chain runs to 317 residues: uncharacterized protein (317 aa).

A run of 7 helical transmembrane segments spans residues 18 to 38, 58 to 78, 92 to 112, 130 to 150, 165 to 185, 202 to 222, and 253 to 273; these read WWII…LIII, IIFG…GFIF, FLGH…WWSV, LFAT…AFGV, QPLS…KGEL, LAFL…LSTV, and LWGG…LMVN.

Belongs to the CbiQ family.

The protein resides in the cell membrane. This is an uncharacterized protein from Mycoplasma pneumoniae (strain ATCC 29342 / M129 / Subtype 1) (Mycoplasmoides pneumoniae).